We begin with the raw amino-acid sequence, 334 residues long: Holliday junction branch migration complex subunit RuvB (334 aa).

Residues 4–184 (ADRLIQPQLQ…FGIPLRLEFY (181 aa)) are large ATPase domain (RuvB-L). ATP is bound by residues Arg-24, Gly-65, Lys-68, Thr-69, Thr-70, 131–133 (EDY), Arg-174, Tyr-184, and Arg-221. Thr-69 lines the Mg(2+) pocket. Residues 185–255 (NVKDLSTIVS…VAEHALDLLD (71 aa)) are small ATPAse domain (RuvB-S). The tract at residues 258 to 334 (GEGFDYMDRK…YLHFGMIKPE (77 aa)) is head domain (RuvB-H). Positions 294, 313, and 318 each coordinate DNA.

This sequence belongs to the RuvB family. In terms of assembly, homohexamer. Forms an RuvA(8)-RuvB(12)-Holliday junction (HJ) complex. HJ DNA is sandwiched between 2 RuvA tetramers; dsDNA enters through RuvA and exits via RuvB. An RuvB hexamer assembles on each DNA strand where it exits the tetramer. Each RuvB hexamer is contacted by two RuvA subunits (via domain III) on 2 adjacent RuvB subunits; this complex drives branch migration. In the full resolvosome a probable DNA-RuvA(4)-RuvB(12)-RuvC(2) complex forms which resolves the HJ.

The protein localises to the cytoplasm. The catalysed reaction is ATP + H2O = ADP + phosphate + H(+). Its function is as follows. The RuvA-RuvB-RuvC complex processes Holliday junction (HJ) DNA during genetic recombination and DNA repair, while the RuvA-RuvB complex plays an important role in the rescue of blocked DNA replication forks via replication fork reversal (RFR). RuvA specifically binds to HJ cruciform DNA, conferring on it an open structure. The RuvB hexamer acts as an ATP-dependent pump, pulling dsDNA into and through the RuvAB complex. RuvB forms 2 homohexamers on either side of HJ DNA bound by 1 or 2 RuvA tetramers; 4 subunits per hexamer contact DNA at a time. Coordinated motions by a converter formed by DNA-disengaged RuvB subunits stimulates ATP hydrolysis and nucleotide exchange. Immobilization of the converter enables RuvB to convert the ATP-contained energy into a lever motion, pulling 2 nucleotides of DNA out of the RuvA tetramer per ATP hydrolyzed, thus driving DNA branch migration. The RuvB motors rotate together with the DNA substrate, which together with the progressing nucleotide cycle form the mechanistic basis for DNA recombination by continuous HJ branch migration. Branch migration allows RuvC to scan DNA until it finds its consensus sequence, where it cleaves and resolves cruciform DNA. This Shewanella sp. (strain MR-7) protein is Holliday junction branch migration complex subunit RuvB.